A 1742-amino-acid chain; its full sequence is NACHT and WD repeat domain-containing protein 2 (1742 aa).

LRR repeat units follow at residues 386–410, 677–698, 724–747, 883–906, and 925–953; these read FYEYKCESLNIVHNYILPSKAGHIN, LEDVLALDNSVMSELKENTRPS, VKNVTLLVWANRHLQLIAQKLYLQ, YSQEKELKFLANTLRSIKNKVTAF, and LPKLRHLLLECDKDGPKYCSIVPLHSSMD. In terms of domain architecture, NACHT spans 410–737; the sequence is NPLIIYGGPC…TLLVWANRHL (328 aa). WD repeat units follow at residues 963 to 1004, 1007 to 1046, 1140 to 1179, 1229 to 1271, 1272 to 1311, 1314 to 1353, 1355 to 1394, 1396 to 1434, 1476 to 1516, 1522 to 1564, and 1614 to 1653; these read LSSS…LLRQ, TAQSVILGMKLTSDEKYLVVATTNNTLLIYDNVNSCLLSE, FSGGFVKFLLILDTAQEMVMVDSEGSLSVWNTEDISSPQL, KHNE…ASLQ, EISGSIVKLVKSSHHNMLLSLSTSGVLSIWDIDIITAMSN, KTGKPIQSLLLPARGEIIYSLDGSDCVHKWNFSSGFIEAV, KHEGIVEHCVLTSTGDIMVTSDDKSSQYVWHTSSGENLFR, NGQRISQLLITHNDQFVVSLCEENASRVWRLATGHRVCN, EDGT…ICRR, NFLK…VHAS, and SLYKTPTFLALSQRHLNIIVGFDDGSIGIYTVVDRVDAAL.

This chain is NACHT and WD repeat domain-containing protein 2 (NWD2), found in Homo sapiens (Human).